The sequence spans 558 residues: Potassium-transporting ATPase potassium-binding subunit (558 aa).

The next 12 helical transmembrane spans lie at 1 to 21 (MSIV…SRYL), 60 to 80 (IKHF…LLLI), 129 to 149 (VITF…IAML), 169 to 189 (FIVR…ISQG), 246 to 266 (WSNY…VFLF), 281 to 301 (IMIF…CLYF), 326 to 346 (FGIG…TGTV), 353 to 373 (LTPL…VFGG), 376 to 396 (VGLM…SLMI), 415 to 435 (IALS…LAFI), 485 to 505 (IVML…VSSL), and 523 to 543 (LFFS…TFLP).

It belongs to the KdpA family. As to quaternary structure, the system is composed of three essential subunits: KdpA, KdpB and KdpC.

It localises to the cell membrane. Part of the high-affinity ATP-driven potassium transport (or Kdp) system, which catalyzes the hydrolysis of ATP coupled with the electrogenic transport of potassium into the cytoplasm. This subunit binds the extracellular potassium ions and delivers the ions to the membrane domain of KdpB through an intramembrane tunnel. The polypeptide is Potassium-transporting ATPase potassium-binding subunit (Staphylococcus haemolyticus (strain JCSC1435)).